The sequence spans 591 residues: Splicing factor U2af large subunit A (591 aa).

Residues 1–215 form a disordered region; that stretch reads MAEHDAPPES…QSKRMSGFDQ (215 aa). The segment covering 27–36 has biased composition (polar residues); it reads SPQQDAQPLS. Basic and acidic residues-rich tracts occupy residues 37–79 and 157–191; these read SRDR…SRDR and RERS…DRDG. 2 consecutive RRM domains span residues 272–355 and 392–470; these read RRVY…RPTD and DRIF…RANQ.

It belongs to the splicing factor SR family.

The protein resides in the nucleus. Functionally, necessary for the splicing of pre-mRNA. The polypeptide is Splicing factor U2af large subunit A (U2AF65A) (Triticum aestivum (Wheat)).